The sequence spans 229 residues: PKHD-type hydroxylase BRADO6316 (229 aa).

The Fe2OG dioxygenase domain occupies 78-180; that stretch reads QIFPPLFNRY…RVASFFWLQS (103 aa). The Fe cation site is built by histidine 98, aspartate 100, and histidine 161. 2-oxoglutarate is bound at residue arginine 171.

It depends on Fe(2+) as a cofactor. L-ascorbate is required as a cofactor.

This Bradyrhizobium sp. (strain ORS 278) protein is PKHD-type hydroxylase BRADO6316.